Here is a 164-residue protein sequence, read N- to C-terminus: Large ribosomal subunit protein uL10 (164 aa).

It belongs to the universal ribosomal protein uL10 family. Part of the ribosomal stalk of the 50S ribosomal subunit. The N-terminus interacts with L11 and the large rRNA to form the base of the stalk. The C-terminus forms an elongated spine to which L12 dimers bind in a sequential fashion forming a multimeric L10(L12)X complex.

Functionally, forms part of the ribosomal stalk, playing a central role in the interaction of the ribosome with GTP-bound translation factors. This is Large ribosomal subunit protein uL10 (rplJ) from Helicobacter pylori (strain J99 / ATCC 700824) (Campylobacter pylori J99).